The primary structure comprises 311 residues: Solute carrier family 25 member 36-A (311 aa).

3 Solcar repeats span residues 4–108, 116–203, and 224–308; these read RDTL…SKEK, DSTQ…IKRK, and SDFV…VVYL. The next 6 helical transmembrane spans lie at 7 to 27, 41 to 57, 111 to 131, 180 to 200, 226 to 246, and 291 to 311; these read LVHL…TCPL, FYIS…ASVA, NVFD…AGFT, MSAS…YESI, FVGM…IAYP, and QIPN…LLNG.

Belongs to the mitochondrial carrier (TC 2.A.29) family.

The protein localises to the mitochondrion inner membrane. This is Solute carrier family 25 member 36-A (slc25a36a) from Danio rerio (Zebrafish).